Reading from the N-terminus, the 342-residue chain is MKIKVGILGASGYAGNELVRILLNHPKVEISYLGSSSSVGQNYQDLYPNTPLNLCFENKNLDELELDLLFLATPHEFSAKLLNENLLKKMKIIDLSADFRLKNPKDYELWYKFTHPNQELLQNAVYGLCELYKEEIKKASLVANPGCYTTCSILSLYPLFKEKIIDFSSVIIDAKSGVSGAGRSAKVENLFCEVNENIKAYNLALHRHTPEIEEHLSYAAKKKITLQFTPHLVSMQRGILISAYANLKEDLQEQDIRDIYTKYYQNNKFIRLLPPQSLPQTRWVKSSNFADINFSVDQRTKRVIVLGAIDNLIKGAAGQAVQNMNLMFDFDEDEGLKFFANL.

The active site involves cysteine 147.

Belongs to the NAGSA dehydrogenase family. Type 1 subfamily.

The protein localises to the cytoplasm. It catalyses the reaction N-acetyl-L-glutamate 5-semialdehyde + phosphate + NADP(+) = N-acetyl-L-glutamyl 5-phosphate + NADPH + H(+). It participates in amino-acid biosynthesis; L-arginine biosynthesis; N(2)-acetyl-L-ornithine from L-glutamate: step 3/4. Functionally, catalyzes the NADPH-dependent reduction of N-acetyl-5-glutamyl phosphate to yield N-acetyl-L-glutamate 5-semialdehyde. The sequence is that of N-acetyl-gamma-glutamyl-phosphate reductase from Campylobacter jejuni (strain RM1221).